Consider the following 351-residue polypeptide: Photosystem II D2 protein (351 aa).

A helical membrane pass occupies residues threonine 39 to threonine 59. Position 116 (histidine 116) interacts with chlorophyll a. A helical membrane pass occupies residues glycine 123–proline 139. Positions 128 and 141 each coordinate pheophytin a. A helical transmembrane segment spans residues isoleucine 151–alanine 164. Histidine 196 serves as a coordination point for chlorophyll a. The helical transmembrane segment at alanine 206–aspartate 226 threads the bilayer. The a plastoquinone site is built by histidine 213 and phenylalanine 260. Histidine 213 serves as a coordination point for Fe cation. Histidine 267 is a Fe cation binding site. The helical transmembrane segment at glycine 277–arginine 293 threads the bilayer.

Belongs to the reaction center PufL/M/PsbA/D family. In terms of assembly, PSII is composed of 1 copy each of membrane proteins PsbA, PsbB, PsbC, PsbD, PsbE, PsbF, PsbH, PsbI, PsbJ, PsbK, PsbL, PsbM, PsbT, PsbX, PsbY, PsbZ, Psb30/Ycf12, at least 3 peripheral proteins of the oxygen-evolving complex and a large number of cofactors. It forms dimeric complexes. It depends on The D1/D2 heterodimer binds P680, chlorophylls that are the primary electron donor of PSII, and subsequent electron acceptors. It shares a non-heme iron and each subunit binds pheophytin, quinone, additional chlorophylls, carotenoids and lipids. There is also a Cl(-1) ion associated with D1 and D2, which is required for oxygen evolution. The PSII complex binds additional chlorophylls, carotenoids and specific lipids. as a cofactor.

It is found in the plastid. It localises to the chloroplast thylakoid membrane. It catalyses the reaction 2 a plastoquinone + 4 hnu + 2 H2O = 2 a plastoquinol + O2. In terms of biological role, photosystem II (PSII) is a light-driven water:plastoquinone oxidoreductase that uses light energy to abstract electrons from H(2)O, generating O(2) and a proton gradient subsequently used for ATP formation. It consists of a core antenna complex that captures photons, and an electron transfer chain that converts photonic excitation into a charge separation. The D1/D2 (PsbA/PsbD) reaction center heterodimer binds P680, the primary electron donor of PSII as well as several subsequent electron acceptors. D2 is needed for assembly of a stable PSII complex. This Guillardia theta (Cryptophyte) protein is Photosystem II D2 protein.